A 186-amino-acid polypeptide reads, in one-letter code: MGWISGFRLRLAANALRNGRIVAYPTEAVYGLGCDPFNEDAVRKLLALKRRSQIKGLILIAADVEAVESLVDLARVPLGAEVRAGWPGPTTWLIPPRPGIPDWLRGAHDSLAVRVTAHPVAAALCRVFGGAIVSTSANLSGHRPARTPVRLWRQFPRRAIHFLPGRLGGAVRPTAIFDAMSGRRIR.

A YrdC-like domain is found at 6–186 (GFRLRLAANA…FDAMSGRRIR (181 aa)).

The protein belongs to the SUA5 family. TsaC subfamily.

The protein localises to the cytoplasm. The catalysed reaction is L-threonine + hydrogencarbonate + ATP = L-threonylcarbamoyladenylate + diphosphate + H2O. In terms of biological role, required for the formation of a threonylcarbamoyl group on adenosine at position 37 (t(6)A37) in tRNAs that read codons beginning with adenine. Catalyzes the conversion of L-threonine, HCO(3)(-)/CO(2) and ATP to give threonylcarbamoyl-AMP (TC-AMP) as the acyladenylate intermediate, with the release of diphosphate. This chain is Threonylcarbamoyl-AMP synthase, found in Methylococcus capsulatus (strain ATCC 33009 / NCIMB 11132 / Bath).